The following is a 222-amino-acid chain: Eukaryotic translation initiation factor 3 subunit K (222 aa).

The PCI domain maps to tyrosine 46–lysine 208.

The protein belongs to the eIF-3 subunit K family. As to quaternary structure, component of the eukaryotic translation initiation factor 3 (eIF-3) complex. The eIF-3 complex interacts with pix.

It is found in the cytoplasm. Its function is as follows. Component of the eukaryotic translation initiation factor 3 (eIF-3) complex, which is involved in protein synthesis of a specialized repertoire of mRNAs and, together with other initiation factors, stimulates binding of mRNA and methionyl-tRNAi to the 40S ribosome. The eIF-3 complex specifically targets and initiates translation of a subset of mRNAs involved in cell proliferation. This is Eukaryotic translation initiation factor 3 subunit K from Drosophila mojavensis (Fruit fly).